A 242-amino-acid chain; its full sequence is Cysteine desulfuration protein SufE (242 aa).

C148 (cysteine persulfide intermediate) is an active-site residue.

The protein belongs to the SufE family. Monomer. Interacts with SufS; interaction enhances cysteine desulfurase activity of SufS.

Its subcellular location is the plastid. The protein localises to the apicoplast. Its pathway is cofactor biosynthesis; iron-sulfur cluster biosynthesis. Participates in sulfur mobilization (SUF) pathway for iron-sulfur (Fe-S) cluster biogenesis. Enhances cysteine desulfurase activity of SufS. Probably functions as a sulfur acceptor for SufS. In Plasmodium vivax, this protein is Cysteine desulfuration protein SufE.